The sequence spans 223 residues: Voltage-dependent calcium channel gamma-1 subunit (223 aa).

At 1–10 (MSQTKTLKVR) the chain is on the cytoplasmic side. A helical transmembrane segment spans residues 11–29 (VALLCILVGIVLALVAVVT). The Extracellular segment spans residues 30–109 (DHWAVLSPHV…TQKEYSISAA (80 aa)). Asparagine 43 and asparagine 80 each carry an N-linked (GlcNAc...) asparagine glycan. Cysteine 57 and cysteine 81 are oxidised to a cystine. The chain crosses the membrane as a helical span at residues 110-130 (AIAIFSLGFIIVGTLCALLSF). The Cytoplasmic portion of the chain corresponds to 131-135 (RKKRD). Residues 136 to 156 (YLLRPASMFYIFAGLCLSVSA) form a helical membrane-spanning segment. At 157-180 (EVMRQSVQRMVDSEHTAWIAHSLA) the chain is on the extracellular side. A helical membrane pass occupies residues 181-205 (WSFICACVAAALLLVGGLALLLLAL). The Cytoplasmic portion of the chain corresponds to 206 to 223 (PRMPRDPWESCMDAEPEH).

Belongs to the PMP-22/EMP/MP20 family. CACNG subfamily. In terms of assembly, component of a calcium channel complex consisting of a pore-forming alpha subunit (CACNA1S) and the ancillary subunits CACNB1 or CACNB2, CACNG1 and CACNA2D1. The channel complex contains alpha, beta, gamma and delta subunits in a 1:1:1:1 ratio, i.e. it contains either CACNB1 or CACNB2. N-glycosylated.

The protein localises to the cell membrane. The protein resides in the sarcolemma. Functionally, regulatory subunit of the voltage-gated calcium channel that gives rise to L-type calcium currents in skeletal muscle. Regulates channel inactivation kinetics. This chain is Voltage-dependent calcium channel gamma-1 subunit (CACNG1), found in Bos taurus (Bovine).